We begin with the raw amino-acid sequence, 682 residues long: Two-component system protein A (682 aa).

A disordered region spans residues 11-41 (SLDDNDNGQQHQDEVQAKHQDQGHTCPSRPS). The segment covering 21-32 (HQDEVQAKHQDQ) has biased composition (basic and acidic residues). PAS domains lie at 45 to 105 (LSRI…PILY) and 166 to 239 (MNET…LREG). The PAC domain maps to 241–292 (IEDEGWRYRRDGSRFWANVLITPIYQFGQHVGFVKVTRDLTERKEAEACMIA). The Histidine kinase domain occupies 307–530 (NISHEIRTPM…VFWFTAKMGG (224 aa)). His310 carries the post-translational modification Phosphohistidine; by autocatalysis. The Response regulatory domain occupies 563 to 680 (HVLLVEDNIV…QLLRVLWKWF (118 aa)). 4-aspartylphosphate is present on Asp615.

Activation probably requires a transfer of a phosphate group between a His in the histidine kinase domain and an Asp of the response regulatory domain.

It is found in the cytoplasm. The catalysed reaction is ATP + protein L-histidine = ADP + protein N-phospho-L-histidine.. May be part of a two-component regulatory system required for formation of conidia on certain growth media. This Emericella nidulans (strain FGSC A4 / ATCC 38163 / CBS 112.46 / NRRL 194 / M139) (Aspergillus nidulans) protein is Two-component system protein A.